The sequence spans 101 residues: Small ribosomal subunit protein bS18c (101 aa).

It belongs to the bacterial ribosomal protein bS18 family. In terms of assembly, part of the 30S ribosomal subunit.

It localises to the plastid. The protein resides in the chloroplast. This chain is Small ribosomal subunit protein bS18c, found in Lactuca sativa (Garden lettuce).